The following is a 483-amino-acid chain: Dual specificity protein phosphatase CDC14C (483 aa).

The segment at 1 to 45 (MKRKSEGRSSWAAATCSPCCSLTSPSVKKIRSPTQQDPRHRDPQD) is disordered. The short motif at 1–53 (MKRKSEGRSSWAAATCSPCCSLTSPSVKKIRSPTQQDPRHRDPQDDVYLDITD) is the Nucleolar localization signal element. The segment covering 12–26 (AAATCSPCCSLTSPS) has biased composition (low complexity). The segment at 43–197 (PQDDVYLDIT…AMQYGFLNFN (155 aa)) is a. The tract at residues 198-211 (SFNLDEYEHYEKAE) is linker. The segment at 212-378 (NGDLNWIIPD…EGDYFCQKLK (167 aa)) is b. A Tyrosine-protein phosphatase domain is found at 213-373 (GDLNWIIPDR…TSLWLEGDYF (161 aa)). The Phosphocysteine intermediate role is filled by cysteine 313. The segment at 407 to 426 (QDQQEPEPYSDDDEINGGTQ) is disordered. Residues 408 to 421 (DQQEPEPYSDDDEI) are compositionally biased toward acidic residues. The helical transmembrane segment at 444–466 (ILLTCPLAVLTSALCSVVIWWIV) threads the bilayer.

Belongs to the protein-tyrosine phosphatase family. Non-receptor class CDC14 subfamily.

Its subcellular location is the membrane. It is found in the nucleus. The protein localises to the nucleolus. It localises to the cytoplasm. The protein resides in the cytoskeleton. It carries out the reaction O-phospho-L-tyrosyl-[protein] + H2O = L-tyrosyl-[protein] + phosphate. It catalyses the reaction O-phospho-L-seryl-[protein] + H2O = L-seryl-[protein] + phosphate. The enzyme catalyses O-phospho-L-threonyl-[protein] + H2O = L-threonyl-[protein] + phosphate. In terms of biological role, dual-specificity phosphatase. Preferentially dephosphorylates proteins modified by proline-directed kinases. The protein is Dual specificity protein phosphatase CDC14C of Symphalangus syndactylus (Siamang).